The following is a 740-amino-acid chain: Catalase-peroxidase 2 (740 aa).

Residues 1-27 (MFKKTKPRISILALTISCAIYSGAALA) form the signal peptide. A cross-link (tryptophyl-tyrosyl-methioninium (Trp-Tyr) (with M-254)) is located at residues 106-228 (WHSAGTYRIY…LAAVQMGLIY (123 aa)). Histidine 107 serves as the catalytic Proton acceptor. Positions 228–254 (YVNPEGPNGVPDPLLAAKDIRDTFGRM) form a cross-link, tryptophyl-tyrosyl-methioninium (Tyr-Met) (with W-106). Heme b is bound at residue histidine 269.

This sequence belongs to the peroxidase family. Peroxidase/catalase subfamily. In terms of assembly, homodimer or homotetramer. It depends on heme b as a cofactor. Formation of the three residue Trp-Tyr-Met cross-link is important for the catalase, but not the peroxidase activity of the enzyme.

It catalyses the reaction H2O2 + AH2 = A + 2 H2O. The catalysed reaction is 2 H2O2 = O2 + 2 H2O. Functionally, bifunctional enzyme with both catalase and broad-spectrum peroxidase activity. This is Catalase-peroxidase 2 from Cellvibrio japonicus (strain Ueda107) (Pseudomonas fluorescens subsp. cellulosa).